Consider the following 953-residue polypeptide: Translation initiation factor IF-2 (953 aa).

Disordered stretches follow at residues Ser-48–Ala-248 and Thr-279–Lys-363. Composition is skewed to basic and acidic residues over residues Thr-80–Gln-89, Phe-98–Ala-111, and Gln-140–Lys-188. Polar residues predominate over residues Arg-191–Ser-207. The span at Arg-229 to Ala-248 shows a compositional bias: basic and acidic residues. Positions Lys-282–Thr-291 are enriched in polar residues. The segment covering Ala-300–Lys-317 has biased composition (basic and acidic residues). The segment covering Ser-322–Asn-338 has biased composition (low complexity). A compositionally biased stretch (basic residues) spans Lys-339–Asn-348. The region spanning Glu-454–Lys-623 is the tr-type G domain. Positions Gly-463–Thr-470 are G1. Residue Gly-463–Thr-470 participates in GTP binding. The segment at Gly-488 to His-492 is G2. Positions Asp-509 to Gly-512 are G3. GTP-binding positions include Asp-509–His-513 and Asn-563–Asp-566. The G4 stretch occupies residues Asn-563–Asp-566. Positions Ser-599 to Lys-601 are G5.

Belongs to the TRAFAC class translation factor GTPase superfamily. Classic translation factor GTPase family. IF-2 subfamily.

The protein localises to the cytoplasm. In terms of biological role, one of the essential components for the initiation of protein synthesis. Protects formylmethionyl-tRNA from spontaneous hydrolysis and promotes its binding to the 30S ribosomal subunits. Also involved in the hydrolysis of GTP during the formation of the 70S ribosomal complex. This is Translation initiation factor IF-2 from Streptococcus pyogenes serotype M18 (strain MGAS8232).